Reading from the N-terminus, the 213-residue chain is High frequency lysogenization protein HflD homolog (213 aa).

Residues 79-122 adopt a coiled-coil conformation; sequence QGLNAELTRYTLSLMVLERKLSSAKGALNTLGDRINGLQRQLDH.

Belongs to the HflD family.

The protein resides in the cytoplasm. The protein localises to the cell inner membrane. The chain is High frequency lysogenization protein HflD homolog from Salmonella dublin (strain CT_02021853).